Consider the following 575-residue polypeptide: Interleukin-10 receptor subunit alpha (575 aa).

The N-terminal stretch at 1–16 (MLSRLLPFLVTISSLS) is a signal peptide. Residues 17–241 (LEFIAYGTEL…QYFTVTNLSI (225 aa)) lie on the Extracellular side of the membrane. Asn-50, Asn-66, Asn-113, and Asn-182 each carry an N-linked (GlcNAc...) asparagine glycan. The cysteines at positions 204 and 225 are disulfide-linked. An N-linked (GlcNAc...) asparagine glycan is attached at Asn-238. A helical transmembrane segment spans residues 242-262 (LVISMLLFCGILVCLVLQWYI). The Cytoplasmic segment spans residues 263–575 (RHPGKLPTVL…PLISSLQVEE (313 aa)). Phosphotyrosine is present on residues Tyr-443 and Tyr-493.

It belongs to the type II cytokine receptor family. In terms of assembly, interacts with IL10. Interacts with IL10RB. Interacts (via its cytoplasmic domain) with JAK1 (via N-terminus). Interacts with BTRC; this interaction leads to IL10RA ubiquitination and subsequent degradation. Interacts with STAT3. In terms of processing, phosphorylated. Phosphorylation of the cytoplasmic tail induced STAT3 activation. Post-translationally, ubiquitinated by BTRC; ubiquitination leads to endocytosis and subsequent degradation of IL10RA.

It localises to the cell membrane. It is found in the cytoplasm. In terms of biological role, cell surface receptor for the cytokine IL10 that participates in IL10-mediated anti-inflammatory functions, limiting excessive tissue disruption caused by inflammation. Upon binding to IL10, induces a conformational change in IL10RB, allowing IL10RB to bind IL10 as well. In turn, the heterotetrameric assembly complex, composed of two subunits of IL10RA and IL10RB, activates the kinases JAK1 and TYK2 that are constitutively associated with IL10RA and IL10RB respectively. These kinases then phosphorylate specific tyrosine residues in the intracellular domain in IL10RA leading to the recruitment and subsequent phosphorylation of STAT3. Once phosphorylated, STAT3 homodimerizes, translocates to the nucleus and activates the expression of anti-inflammatory genes. In addition, IL10RA-mediated activation of STAT3 inhibits starvation-induced autophagy. This chain is Interleukin-10 receptor subunit alpha (Il10ra), found in Mus musculus (Mouse).